Consider the following 411-residue polypeptide: Floricaula/leafy-like protein (411 aa).

The tract at residues Pro-220–Thr-259 is disordered. Over residues Ala-231–Ser-240 the composition is skewed to basic residues. The segment covering Lys-241–Pro-255 has biased composition (basic and acidic residues). 3 DNA-binding regions span residues Arg-252–Phe-256, Asn-321–Tyr-328, and Tyr-392–Thr-395.

This sequence belongs to the FLO/LFY family. Expressed in vegetative buds and male cones but not in female cones, vascular tissue, roots or secondary needles.

The protein resides in the nucleus. Functionally, probable transcription factor. The protein is Floricaula/leafy-like protein (FLL) of Pinus radiata (Monterey pine).